The chain runs to 199 residues: Holliday junction branch migration complex subunit RuvA (199 aa).

The tract at residues 1-63 (MIASVRGEVL…EDSMTLYGFT (63 aa)) is domain I. Residues 64-142 (DAETRDLFLT…AAGAAGAPAG (79 aa)) form a domain II region. The segment at 143–153 (AARNGHAVRGP) is flexible linker. The domain III stretch occupies residues 153-199 (PVVEALVGLGFAAKQAEEATDKVLAAEPEAGTSGALRAALSLLGKSR).

This sequence belongs to the RuvA family. Homotetramer. Forms an RuvA(8)-RuvB(12)-Holliday junction (HJ) complex. HJ DNA is sandwiched between 2 RuvA tetramers; dsDNA enters through RuvA and exits via RuvB. An RuvB hexamer assembles on each DNA strand where it exits the tetramer. Each RuvB hexamer is contacted by two RuvA subunits (via domain III) on 2 adjacent RuvB subunits; this complex drives branch migration. In the full resolvosome a probable DNA-RuvA(4)-RuvB(12)-RuvC(2) complex forms which resolves the HJ.

The protein localises to the cytoplasm. Its function is as follows. The RuvA-RuvB-RuvC complex processes Holliday junction (HJ) DNA during genetic recombination and DNA repair, while the RuvA-RuvB complex plays an important role in the rescue of blocked DNA replication forks via replication fork reversal (RFR). RuvA specifically binds to HJ cruciform DNA, conferring on it an open structure. The RuvB hexamer acts as an ATP-dependent pump, pulling dsDNA into and through the RuvAB complex. HJ branch migration allows RuvC to scan DNA until it finds its consensus sequence, where it cleaves and resolves the cruciform DNA. This is Holliday junction branch migration complex subunit RuvA from Mycobacterium avium (strain 104).